Consider the following 292-residue polypeptide: Elongation factor Ts (292 aa).

The segment at 79–82 (TDFV) is involved in Mg(2+) ion dislocation from EF-Tu.

Belongs to the EF-Ts family.

It localises to the cytoplasm. Associates with the EF-Tu.GDP complex and induces the exchange of GDP to GTP. It remains bound to the aminoacyl-tRNA.EF-Tu.GTP complex up to the GTP hydrolysis stage on the ribosome. The chain is Elongation factor Ts from Xylella fastidiosa (strain 9a5c).